The sequence spans 424 residues: Probable ribonuclease FAU-1 (424 aa).

Belongs to the FAU-1 family.

Probable RNase involved in rRNA stability through maturation and/or degradation of precursor rRNAs. Binds to RNA in loop regions with AU-rich sequences. This Saccharolobus islandicus (strain Y.G.57.14 / Yellowstone #1) (Sulfolobus islandicus) protein is Probable ribonuclease FAU-1.